Here is a 173-residue protein sequence, read N- to C-terminus: Translationally-controlled tumor protein homolog (173 aa).

The 173-residue stretch at 1-173 (MIIFKDMITG…FKHGLEEEKV (173 aa)) folds into the TCTP domain.

Belongs to the TCTP family. Expressed by the venom gland.

Its subcellular location is the secreted. Venom protein that causes edema, enhances vascular permeability and is likely related to the inflammatory activity of the venom. This chain is Translationally-controlled tumor protein homolog, found in Grammostola rosea (Chilean rose tarantula).